The following is a 158-amino-acid chain: RING-H2 finger protein ATL66 (158 aa).

The helical transmembrane segment at 33–53 threads the bilayer; the sequence is LFFALALFSVVLFFALLTLYI. Residues 107-149 form an RING-type; atypical zinc finger; the sequence is CCICLGGFEEGEKMKVLPPCSHCYHCECVDRWLKTESSCPLCR.

Belongs to the RING-type zinc finger family. ATL subfamily.

It localises to the membrane. The catalysed reaction is S-ubiquitinyl-[E2 ubiquitin-conjugating enzyme]-L-cysteine + [acceptor protein]-L-lysine = [E2 ubiquitin-conjugating enzyme]-L-cysteine + N(6)-ubiquitinyl-[acceptor protein]-L-lysine.. Its pathway is protein modification; protein ubiquitination. This chain is RING-H2 finger protein ATL66 (ATL66), found in Arabidopsis thaliana (Mouse-ear cress).